Here is a 300-residue protein sequence, read N- to C-terminus: Apolipoprotein E (300 aa).

Positions 1 to 18 (MKVLWAVLVVTLLAGCQA) are cleaved as a signal peptide. The 8 X 22 AA approximate tandem repeats stretch occupies residues 74–246 (VLMEDTMKEV…RLDEVREQME (173 aa)). Repeat copies occupy residues 75-95 (LMEDTMKEVKAYKSELEQELA), 96-117 (PMAEETKARLSKELKAAQARLG), 118-139 (ADMEEVRNRLSQYRGEVQSMLG), 140-161 (HSAEELRARLATHLRKLRKRLL), 162-183 (RDAEDLQKRLAVYKAGASEGAE), 184-205 (RSVSAIRERLGSLVEQGRLRTA), 206-224 (ALTSQPLQERAQAWGERLR), and 225-243 (GRLEEVGSKARDRLDEVRE). Position 137 is a methionine sulfoxide (Met137). At Ser141 the chain carries Phosphoserine. An LDL and other lipoprotein receptors binding region spans residues 152–162 (HLRKLRKRLLR). 156–159 (LRKR) is a heparin binding site. Residues 204–274 (TAALTSQPLQ…GWFEPMMEDI (71 aa)) are lipid-binding and lipoprotein association. 220–227 (GERLRGRL) lines the heparin pocket. Residues 262–274 (RLKGWFEPMMEDI) form a specificity for association with VLDL region.

The protein belongs to the apolipoprotein A1/A4/E family. Homotetramer. May interact with ABCA1; functionally associated with ABCA1 in the biogenesis of HDLs. May interact with APP/A4 amyloid-beta peptide; the interaction is extremely stable in vitro but its physiological significance is unclear. May interact with MAPT. May interact with MAP2. In the cerebrospinal fluid, interacts with secreted SORL1. Interacts with PMEL; this allows the loading of PMEL luminal fragment on ILVs to induce fibril nucleation. APOE exists as multiple glycosylated and sialylated glycoforms within cells and in plasma. The extent of glycosylation and sialylation are tissue and context specific. In terms of processing, glycated in plasma VLDL. Post-translationally, phosphorylated by FAM20C in the extracellular medium.

The protein resides in the secreted. It localises to the extracellular space. It is found in the extracellular matrix. The protein localises to the extracellular vesicle. Its subcellular location is the endosome. The protein resides in the multivesicular body. Functionally, APOE is an apolipoprotein, a protein associating with lipid particles, that mainly functions in lipoprotein-mediated lipid transport between organs via the plasma and interstitial fluids. APOE is a core component of plasma lipoproteins and is involved in their production, conversion and clearance. Apolipoproteins are amphipathic molecules that interact both with lipids of the lipoprotein particle core and the aqueous environment of the plasma. As such, APOE associates with chylomicrons, chylomicron remnants, very low density lipoproteins (VLDL) and intermediate density lipoproteins (IDL) but shows a preferential binding to high-density lipoproteins (HDL). It also binds a wide range of cellular receptors including the LDL receptor/LDLR, the LDL receptor-related proteins LRP1, LRP2 and LRP8 and the very low-density lipoprotein receptor/VLDLR that mediate the cellular uptake of the APOE-containing lipoprotein particles. Finally, APOE also has a heparin-binding activity and binds heparan-sulfate proteoglycans on the surface of cells, a property that supports the capture and the receptor-mediated uptake of APOE-containing lipoproteins by cells. A main function of APOE is to mediate lipoprotein clearance through the uptake of chylomicrons, VLDLs, and HDLs by hepatocytes. APOE is also involved in the biosynthesis by the liver of VLDLs as well as their uptake by peripheral tissues ensuring the delivery of triglycerides and energy storage in muscle, heart and adipose tissues. By participating in the lipoprotein-mediated distribution of lipids among tissues, APOE plays a critical role in plasma and tissues lipid homeostasis. APOE is also involved in two steps of reverse cholesterol transport, the HDLs-mediated transport of cholesterol from peripheral tissues to the liver, and thereby plays an important role in cholesterol homeostasis. First, it is functionally associated with ABCA1 in the biogenesis of HDLs in tissues. Second, it is enriched in circulating HDLs and mediates their uptake by hepatocytes. APOE also plays an important role in lipid transport in the central nervous system, regulating neuron survival and sprouting. The polypeptide is Apolipoprotein E (APOE) (Dinomys branickii (Pacarana)).